The following is a 320-amino-acid chain: Malate dehydrogenase 2 (320 aa).

NAD(+) contacts are provided by residues 10 to 15 (GAGQIG) and Asp34. Residues Arg83 and Arg89 each contribute to the substrate site. Residues Asn96 and 119–121 (ITN) contribute to the NAD(+) site. Positions 121 and 152 each coordinate substrate. The active-site Proton acceptor is His176.

Belongs to the LDH/MDH superfamily. MDH type 3 family.

The enzyme catalyses (S)-malate + NAD(+) = oxaloacetate + NADH + H(+). In terms of biological role, catalyzes the reversible oxidation of malate to oxaloacetate. In Rhodopseudomonas palustris (strain BisB18), this protein is Malate dehydrogenase 2.